The primary structure comprises 528 residues: Calcium-dependent protein kinase 4 (528 aa).

A compositionally biased stretch (polar residues) spans 1 to 16; the sequence is MGQEMSTQSDMQNENQ. A disordered region spans residues 1 to 36; it reads MGQEMSTQSDMQNENQKGNKRNLKGSQGKNGLKERS. A lipid anchor (N-myristoyl glycine) is attached at glycine 2. Residues 70 to 328 form the Protein kinase domain; that stretch reads YKGIKILGKG…ARDALEHEWI (259 aa). Residues 76–84 and lysine 99 each bind ATP; that span reads LGKGSFGEV. Catalysis depends on aspartate 193, which acts as the Proton acceptor. The J domain autoinhibitory motif motif lies at 350–358; the sequence is NIKQFQSTQ. A j domain region spans residues 350–386; that stretch reads NIKQFQSTQKLAQAALLYMGSKLTTIDETKELTKIFK. A J domain EF-hand interaction motif motif is present at residues 359–368; sequence KLAQAALLYM. 4 EF-hand domains span residues 376-411, 423-458, 459-494, and 498-528; these read DETK…LLKL, AIEV…RKLL, LSTE…GDVS, and WKTV…LCNY. 20 residues coordinate Ca(2+): aspartate 389, asparagine 391, aspartate 393, glutamine 395, glutamate 400, aspartate 436, aspartate 438, asparagine 440, tyrosine 442, glutamate 447, aspartate 472, aspartate 474, serine 476, lysine 478, glutamate 483, aspartate 506, asparagine 508, aspartate 510, glutamate 512, and glutamate 517.

This sequence belongs to the protein kinase superfamily. Ser/Thr protein kinase family. CDPK subfamily. As to quaternary structure, may interact with the pre-replication MCM complex prior male gametogenesis activation. It depends on Mg(2+) as a cofactor. Myristoylated; myristoylation may target it to different subcellular compartments. During male gametogenesis, myristoylation is required to initiate DNA replication but not for mitotic spindle assembly or axoneme activation. Post-translationally, not palmitoylated. In terms of processing, may be autophosphorylated on Thr-234 in vitro.

It localises to the cytoplasm. It is found in the membrane. The protein localises to the chromosome. It carries out the reaction L-seryl-[protein] + ATP = O-phospho-L-seryl-[protein] + ADP + H(+). It catalyses the reaction L-threonyl-[protein] + ATP = O-phospho-L-threonyl-[protein] + ADP + H(+). With respect to regulation, activated by calcium. Upon calcium binding to the EF-hand domains, the C-terminus of the junction domain (J domain) undergoes a conformational change which results in the dissociation of the pseudo-substrate inhibitory motif from the catalytic domain. This, in turn, may facilitate the autophosphorylation of the activation loop at Thr-234, which leads to the kinase activation. Intracellular calcium increase is triggered by xanthurenic acid (XA), a small mosquito molecule that induces the differentiation of specialized transmission stages, the gametocytes, into male and female gametes. Activated by a decrease in temperature (20 degrees Celsius) and an increase in pH (7.6) occurring when the parasite is ingested by in the mosquito. Its function is as follows. Calcium-dependent protein kinase which acts as a sensor and effector of intracellular Ca(2+) levels probably in part downstream of cGMP-activated PKG kinase. Plays a central role in the host erythrocytes and hepatocytes infection cycles, sexual reproduction and mosquito transmission of the parasite. During the liver stage, involved in sporozoite motility and thus in sporozoite invasion of host hepatocytes, probably together with CDPK1 and CDPK5. Involved in merosome egress from host hepatocytes, probably together with CDPK5. During the asexual blood stage, involved in merozoite invasion of host erythrocytes and motility by stabilizing the inner membrane complex, a structure below the plasma membrane which acts as an anchor for the glidosome, an acto-myosin motor. Required for cell cycle progression in the male gametocyte. During male gametogenesis in the mosquito gut, required to initiate the first round of DNA replication, probably by facilitating the assembly of the pre-replicative MCM complex, to assemble the first mitotic spindle and, at the end of gametogenesis, to initiate axoneme motility, cytokinesis and subsequent exflagellation. For each of these steps, may phosphorylate SOC1, SOC2 and SOC3, respectively. Together with CDPK1, regulates ookinete gliding in the mosquito host midgut. Functionally, during male gametogenesis in the mosquito gut, required to initiate the first round of DNA replication, probably by facilitating the assembly of the pre-replicative MCM complex, and to assemble the first mitotic spindle. In terms of biological role, at the end of male gametogenesis in the mosquito gut, required to initiate axoneme motility, cytokinesis and subsequent exflagellation. This Plasmodium berghei (strain Anka) protein is Calcium-dependent protein kinase 4.